A 1526-amino-acid chain; its full sequence is High affinity cGMP-specific 3',5'-cyclic phosphodiesterase 9A (1526 aa).

Low complexity predominate over residues methionine 1–serine 43. 3 disordered regions span residues methionine 1–threonine 48, serine 266–alanine 348, and arginine 393–cysteine 476. Composition is skewed to basic and acidic residues over residues arginine 270–aspartate 282 and glutamate 305–threonine 314. 2 stretches are compositionally biased toward low complexity: residues isoleucine 324 to alanine 348 and glutamine 401 to threonine 440. Residues proline 441–proline 462 are compositionally biased toward polar residues. The 322-residue stretch at valine 664–glutamine 985 folds into the PDEase domain. Catalysis depends on histidine 740, which acts as the Proton donor. Histidine 740–histidine 744 contacts 3',5'-cyclic GMP. The Zn(2+) site is built by histidine 744, histidine 780, aspartate 781, and aspartate 890. 3',5'-cyclic GMP-binding residues include aspartate 781 and aspartate 890. Mg(2+) is bound at residue aspartate 781. Disordered stretches follow at residues threonine 986–glycine 1170, threonine 1265–proline 1284, serine 1314–tryptophan 1351, arginine 1372–glycine 1406, and arginine 1469–glycine 1496. The segment covering alanine 993–serine 1005 has biased composition (low complexity). Positions asparagine 1033–cysteine 1057 are enriched in gly residues. Positions valine 1065–threonine 1093 are enriched in polar residues. The span at valine 1125–threonine 1136 shows a compositional bias: basic and acidic residues. Residues serine 1139–serine 1148 show a composition bias toward low complexity. Low complexity predominate over residues serine 1314–serine 1324. Positions glycine 1325–methionine 1340 are enriched in gly residues. Low complexity-rich tracts occupy residues proline 1341–serine 1350 and serine 1375–glycine 1397. Polar residues predominate over residues tyrosine 1470–serine 1486.

The protein belongs to the cyclic nucleotide phosphodiesterase family. PDE9 subfamily. Zn(2+) serves as cofactor. It depends on Mg(2+) as a cofactor. As to expression, expressed in Malpighian tubules and adult fly head.

The enzyme catalyses 3',5'-cyclic GMP + H2O = GMP + H(+). It functions in the pathway purine metabolism; 3',5'-cyclic GMP degradation; GMP from 3',5'-cyclic GMP: step 1/1. Functionally, specifically hydrolyzes the second messenger cGMP, which is a key regulator of many important physiological processes. Highly specific: compared to other members of the cyclic nucleotide phosphodiesterase family, has the highest affinity and selectivity for cGMP. The protein is High affinity cGMP-specific 3',5'-cyclic phosphodiesterase 9A of Drosophila melanogaster (Fruit fly).